Consider the following 744-residue polypeptide: Prestin (744 aa).

Residues 1–75 (MDHAEENEIL…PITKWLPAYK (75 aa)) lie on the Cytoplasmic side of the membrane. A helical transmembrane segment spans residues 76–105 (FKEYVLGDLVSGISTGVLQLPQGLAFAMLA). Topologically, residues 106-108 (AVP) are extracellular. A helical transmembrane segment spans residues 109–126 (PIFGLYSSFYPVIMYCFL). The Cytoplasmic portion of the chain corresponds to 127-137 (GTSRHISIGPF). Residues 138–151 (AVISLMIGGVAVRL) traverse the membrane as a helical segment. Topologically, residues 152–168 (VPDDIVIPGGVNATNGT) are extracellular. The short motif at 158–168 (IPGGVNATNGT) is the Involved in motor function element. Residues Asn163 and Asn166 are each glycosylated (N-linked (GlcNAc...) asparagine). Residues 169–196 (EARDALRVKVAMSVTLLSGIIQFCLGVC) traverse the membrane as a helical segment. The Cytoplasmic portion of the chain corresponds to 197–206 (RFGFVAIYLT). A helical transmembrane segment spans residues 207–230 (EPLVRGFTTAAAVHVFTSMLKYLF). The Extracellular segment spans residues 231–241 (GVKTKRYSGIF). Positions 242–253 (SVVYSTVAVLQN) form an intramembrane region, helical. The Extracellular segment spans residues 254–258 (VKNLN). The chain crosses the membrane as a helical span at residues 259-282 (VCSLGVGLMVFGLLLGGKEFNERF). Topologically, residues 283 to 291 (KEKLPAPIP) are cytoplasmic. The chain crosses the membrane as a helical span at residues 292-307 (LEFFAVVMGTGISAGF). Residues 308–332 (NLKESYNVDVVGTLPLGLLPPANPD) lie on the Extracellular side of the membrane. The helical transmembrane segment at 333–367 (TSLFHLVYVDAIAIAIVGFSVTISMAKTLANKHGY) threads the bilayer. Over 368-370 (QVD) the chain is Cytoplasmic. The helical transmembrane segment at 371–388 (GNQELIALGLCNSIGSLF) threads the bilayer. Residues 389–396 (QTFSISCS) lie on the Extracellular side of the membrane. The helical transmembrane segment at 397–406 (LSRSLVQEGT) threads the bilayer. Ser398 contacts salicylate. Over 407-410 (GGKT) the chain is Cytoplasmic. The chain crosses the membrane as a helical span at residues 411–432 (QLAGCLASLMILLVILATGFLF). Topologically, residues 433 to 436 (ESLP) are extracellular. A helical membrane pass occupies residues 437-464 (QAVLSAIVIVNLKGMFMQFSDLPFFWRT). Position 465 (Ser465) is a topological domain, cytoplasmic. Residues 466–481 (KIELTIWLTTFVSSLF) traverse the membrane as a helical segment. Over 482–483 (LG) the chain is Extracellular. Residues 484–504 (LDYGLITAVIIALLTVIYRTQ) traverse the membrane as a helical segment. The extended region for STAS domain stretch occupies residues 505–718 (SPSYKVLGKL…AVLGSQLREA (214 aa)). Topologically, residues 505 to 744 (SPSYKVLGKL…PNATPATPEA (240 aa)) are cytoplasmic. The STAS domain occupies 525–713 (AYEEVKEIPG…HSIHDAVLGS (189 aa)). Residues 718–744 (ALAEQEASAPPSQEDLEPNATPATPEA) form a disordered region.

The protein belongs to the SLC26A/SulP transporter (TC 2.A.53) family. As to quaternary structure, homodimer. Interacts (via STAS domain) with CALM; this interaction is calcium-dependent and the STAS domain interacts with only one lobe of CALM which is an elongated conformation. Interacts with MYH1.

It is found in the lateral cell membrane. It carries out the reaction 2 hydrogencarbonate(in) + chloride(out) = 2 hydrogencarbonate(out) + chloride(in). Its function is as follows. Voltage-sensitive motor protein that drives outer hair cell (OHC) electromotility (eM) and participates in sound amplification in the hearing organ. Converts changes in the transmembrane electric potential into mechanical displacements resulting in the coupling of its expansion to movement of a charged voltage sensor across the lipid membrane. The nature of the voltage sensor is not completely clear, and two models compete. In the first model, acts as an incomplete transporter where intracellular chloride anion acts as extrinsic voltage sensor that drives conformational change in the protein which is sufficient to produce a length change in the plane of the membrane and hence in the length of the OHC. The second model in which multiple charged amino acid residues are distributed at the intracellular and extracellular membrane interfaces that form an intrinsic voltage sensor, whose movement produces the non-linear capacitance (NLC). However, the effective voltage sensor may be the result of a hybrid voltage sensor, assembled from intrinsic charge (charged residues) and extrinsic charge (bound anion). Notably, binding of anions to the anion-binding pocket partially neutralizes the intrinsic positive charge rather than to form an electrically negative sensor, therefore remaining charge may serve as voltage sensor that, after depolarization, moves from down (expanded state) to up (contracted) conformation, which is accompanied by an eccentric contraction of the intermembrane cross-sectional area of the protein as well as a major increase in the hydrophobic thickness of the protein having as consequences the plasma membrane thickening and the cell contraction after membrane depolarization. The anion-binding pocket transits from the inward-open (Down) state, where it is exposed toward the intracellular solvent in the absence of anion, to the occluded (Up) state upon anion binding. Salicylate competes for the anion-binding site and inhibits the voltage-sensor movement, and therefore inhibits the charge transfer and electromotility by displacing Cl(-) from the anion-binding site and by preventing the structural transitions to the contracted state. In addition, can act as a weak Cl(-)/HCO3(-) antiporter across the cell membrane and so regulate the intracellular pH of the outer hair cells (OHCs), while firstly found as being unable to mediate electrogenic anion transport. Moreover, supports a role in cardiac mechanical amplification serving as an elastic element to enhance the actomyosin- based sarcomere contraction system. The polypeptide is Prestin (Homo sapiens (Human)).